The following is a 482-amino-acid chain: Altronate oxidoreductase (482 aa).

An NAD(+)-binding site is contributed by Ile-18–Ala-29.

It belongs to the mannitol dehydrogenase family. UxaB subfamily.

It carries out the reaction D-altronate + NAD(+) = keto-D-tagaturonate + NADH + H(+). It functions in the pathway carbohydrate metabolism; pentose and glucuronate interconversion. The polypeptide is Altronate oxidoreductase (Shigella sonnei (strain Ss046)).